The chain runs to 354 residues: Protein RecA (354 aa).

67-74 (GPESSGKT) serves as a coordination point for ATP.

This sequence belongs to the RecA family.

It localises to the cytoplasm. Can catalyze the hydrolysis of ATP in the presence of single-stranded DNA, the ATP-dependent uptake of single-stranded DNA by duplex DNA, and the ATP-dependent hybridization of homologous single-stranded DNAs. It interacts with LexA causing its activation and leading to its autocatalytic cleavage. This Enterobacter agglomerans (Erwinia herbicola) protein is Protein RecA.